Consider the following 204-residue polypeptide: B9 domain-containing protein 1 (204 aa).

The C2 B9-type domain occupies 9–127 (FLLMITGQVE…TIPMFVPEST (119 aa)).

The protein belongs to the B9D family. In terms of assembly, part of the tectonic-like complex (also named B9 complex).

Its subcellular location is the cytoplasm. The protein resides in the cytoskeleton. It is found in the cilium basal body. Functionally, component of the tectonic-like complex, a complex localized at the transition zone of primary cilia and acting as a barrier that prevents diffusion of transmembrane proteins between the cilia and plasma membranes. Required for ciliogenesis and sonic hedgehog/SHH signaling. In Mus musculus (Mouse), this protein is B9 domain-containing protein 1 (B9d1).